Here is a 224-residue protein sequence, read N- to C-terminus: Endonuclease NucS (224 aa).

Belongs to the NucS endonuclease family.

Its subcellular location is the cytoplasm. Its function is as follows. Cleaves both 3' and 5' ssDNA extremities of branched DNA structures. This is Endonuclease NucS from Mycolicibacterium smegmatis (strain ATCC 700084 / mc(2)155) (Mycobacterium smegmatis).